We begin with the raw amino-acid sequence, 355 residues long: Histidinol-phosphate aminotransferase (355 aa).

N6-(pyridoxal phosphate)lysine is present on K211.

The protein belongs to the class-II pyridoxal-phosphate-dependent aminotransferase family. Histidinol-phosphate aminotransferase subfamily. As to quaternary structure, homodimer. Pyridoxal 5'-phosphate serves as cofactor.

The catalysed reaction is L-histidinol phosphate + 2-oxoglutarate = 3-(imidazol-4-yl)-2-oxopropyl phosphate + L-glutamate. Its pathway is amino-acid biosynthesis; L-histidine biosynthesis; L-histidine from 5-phospho-alpha-D-ribose 1-diphosphate: step 7/9. The protein is Histidinol-phosphate aminotransferase of Aeromonas salmonicida (strain A449).